We begin with the raw amino-acid sequence, 98 residues long: Cell division topological specificity factor (98 aa).

Belongs to the MinE family.

Prevents the cell division inhibition by proteins MinC and MinD at internal division sites while permitting inhibition at polar sites. This ensures cell division at the proper site by restricting the formation of a division septum at the midpoint of the long axis of the cell. This chain is Cell division topological specificity factor, found in Nitrosomonas europaea (strain ATCC 19718 / CIP 103999 / KCTC 2705 / NBRC 14298).